Here is a 205-residue protein sequence, read N- to C-terminus: dITP/XTP pyrophosphatase (205 aa).

Residue 11 to 16 (TKNMGK) coordinates substrate. Mg(2+) contacts are provided by Glu44 and Asp73. Asp73 functions as the Proton acceptor in the catalytic mechanism. Substrate contacts are provided by residues Ser74, 158 to 161 (FGYD), Lys181, and 186 to 187 (HR).

Belongs to the HAM1 NTPase family. In terms of assembly, homodimer. Mg(2+) serves as cofactor.

The enzyme catalyses XTP + H2O = XMP + diphosphate + H(+). The catalysed reaction is dITP + H2O = dIMP + diphosphate + H(+). It catalyses the reaction ITP + H2O = IMP + diphosphate + H(+). Functionally, pyrophosphatase that catalyzes the hydrolysis of nucleoside triphosphates to their monophosphate derivatives, with a high preference for the non-canonical purine nucleotides XTP (xanthosine triphosphate), dITP (deoxyinosine triphosphate) and ITP. Seems to function as a house-cleaning enzyme that removes non-canonical purine nucleotides from the nucleotide pool, thus preventing their incorporation into DNA/RNA and avoiding chromosomal lesions. This chain is dITP/XTP pyrophosphatase, found in Bacillus thuringiensis subsp. konkukian (strain 97-27).